A 129-amino-acid chain; its full sequence is Glycine cleavage system H protein (129 aa).

The Lipoyl-binding domain maps to 24 to 106 (TFTVGISEHA…YGDGWLFRIK (83 aa)). Residue K65 is modified to N6-lipoyllysine.

Belongs to the GcvH family. As to quaternary structure, the glycine cleavage system is composed of four proteins: P, T, L and H. The cofactor is (R)-lipoate.

In terms of biological role, the glycine cleavage system catalyzes the degradation of glycine. The H protein shuttles the methylamine group of glycine from the P protein to the T protein. The chain is Glycine cleavage system H protein from Idiomarina loihiensis (strain ATCC BAA-735 / DSM 15497 / L2-TR).